The primary structure comprises 209 residues: V-type ATP synthase subunit D (209 aa).

It belongs to the V-ATPase D subunit family.

In terms of biological role, produces ATP from ADP in the presence of a proton gradient across the membrane. This Thermoanaerobacter pseudethanolicus (strain ATCC 33223 / 39E) (Clostridium thermohydrosulfuricum) protein is V-type ATP synthase subunit D.